Reading from the N-terminus, the 97-residue chain is MTALTKADMADHLSELTSLNRREAKQMVELFFDEISQALIAGEHVKLSGFGNFELRDKRERPGRNPKTGEEIPISARRVVTFRAGQKFRQRVGTEQE.

Belongs to the bacterial histone-like protein family. Heterodimer of an alpha and a beta chain.

This protein is one of the two subunits of integration host factor, a specific DNA-binding protein that functions in genetic recombination as well as in transcriptional and translational control. This chain is Integration host factor subunit alpha, found in Acinetobacter baylyi (strain ATCC 33305 / BD413 / ADP1).